The following is a 745-amino-acid chain: Meiotic driver SPOK3 (745 aa).

The stretch at 4 to 34 (KDRITQLLRELEEAKAREAQERCEKERLQLE) forms a coiled coil. Disordered regions lie at residues 173 to 222 (ELTQ…DGVG) and 407 to 487 (LSSA…VDPQ). Over residues 188–197 (TSDRSLERRQ) the composition is skewed to basic and acidic residues. Composition is skewed to polar residues over residues 208-217 (KSKYICSNRQ) and 409-422 (SAPS…SEYT). Positions 214 to 325 (SNRQPDGVGI…LLLYVDRDDW (112 aa)) are required for antidote activity. Over residues 466–482 (AKRERGPSSGGKDDGRS) the composition is skewed to basic and acidic residues. Residues 491 to 745 (QYCTQACLLG…SPMATPSHGG (255 aa)) are required for poison activity.

It localises to the cytoplasm. The protein localises to the nucleus. Functionally, promotes unequal transmission of alleles from the parental zygote to progeny spores by acting as poison/antidote system, leading to poisoning of progeny that do not inherit the allele. May possess DNA nuclease activity that leads to spore killing, and a kinase activity that confers resistance to the nuclease activity. In Podospora anserina (Pleurage anserina), this protein is Meiotic driver SPOK3.